Consider the following 193-residue polypeptide: DNA dC-&gt;dU-editing enzyme APOBEC-3H (193 aa).

The CMP/dCMP-type deaminase domain maps to Y24–L126. H54 lines the Zn(2+) pocket. Residue E56 is the Proton donor of the active site. Zn(2+) is bound by residues C85 and C88.

Belongs to the cytidine and deoxycytidylate deaminase family. Homodimer. Zn(2+) serves as cofactor. As to expression, expressed in peripheral blood mononuclear cells.

The protein resides in the cytoplasm. The catalysed reaction is a 2'-deoxycytidine in single-stranded DNA + H2O + H(+) = a 2'-deoxyuridine in single-stranded DNA + NH4(+). Its function is as follows. DNA deaminase (cytidine deaminase) which acts as an inhibitor of retrovirus replication and retrotransposon mobility via deaminase-dependent and -independent mechanisms. Selectively targets single-stranded DNA and does not deaminate double-stranded DNA or single- or double-stranded RNA. Exhibits single-stranded DNA deaminase activity (in vitro). Incorporates into the released virions of the virion infectivity factor (vif)-deficient feline immunodeficiency virus (FIV) and suppresses FIV infectivity, probably in a deaminase-dependent manner (in vitro). Induces G-to-A hypermutations in vif-deficient FIV (in vitro). The APOBEC3H/APOBEC3Z3 haplotype 5 exhibits antiviral activity against vif-proficient FIV, strains Petaluma, C36 and Shizuoka (in vitro). Does not exhibit inhibitory activity against feline leukemia virus (FeLV), feline endogenous retrovirus (RD-114 virus) or a long interspersed nuclear element-1 (LINE-1) retrotransposon (in vitro). The sequence is that of DNA dC-&gt;dU-editing enzyme APOBEC-3H from Felis catus (Cat).